Reading from the N-terminus, the 146-residue chain is Small ribosomal subunit protein bS16 (146 aa).

A compositionally biased stretch (basic and acidic residues) spans 84 to 102 (SHLEAQKAAVERLGRRKDY). Residues 84-146 (SHLEAQKAAV…DAPAAEATTE (63 aa)) are disordered. The segment covering 110–119 (APKAAPVAEA) has biased composition (low complexity). Acidic residues predominate over residues 120 to 130 (PAEEAPAEEPA). Residues 131 to 146 (AEASTDDAPAAEATTE) are compositionally biased toward low complexity.

Belongs to the bacterial ribosomal protein bS16 family.

This Rhodopirellula baltica (strain DSM 10527 / NCIMB 13988 / SH1) protein is Small ribosomal subunit protein bS16.